Consider the following 229-residue polypeptide: 7-cyano-7-deazaguanine synthase (229 aa).

Residue L9 to L19 participates in ATP binding. 4 residues coordinate Zn(2+): C192, C202, C205, and C208.

This sequence belongs to the QueC family. The cofactor is Zn(2+).

It carries out the reaction 7-carboxy-7-deazaguanine + NH4(+) + ATP = 7-cyano-7-deazaguanine + ADP + phosphate + H2O + H(+). It participates in purine metabolism; 7-cyano-7-deazaguanine biosynthesis. Catalyzes the ATP-dependent conversion of 7-carboxy-7-deazaguanine (CDG) to 7-cyano-7-deazaguanine (preQ(0)). The sequence is that of 7-cyano-7-deazaguanine synthase from Kineococcus radiotolerans (strain ATCC BAA-149 / DSM 14245 / SRS30216).